A 194-amino-acid chain; its full sequence is dITP/XTP pyrophosphatase (194 aa).

Position 8–13 (8–13 (TGNPGK)) interacts with substrate. Residues Glu-38 and Asp-67 each contribute to the Mg(2+) site. Asp-67 functions as the Proton acceptor in the catalytic mechanism. Residues Ser-68, 146 to 149 (FGYD), Lys-169, and 174 to 175 (HR) each bind substrate.

It belongs to the HAM1 NTPase family. In terms of assembly, homodimer. The cofactor is Mg(2+).

The enzyme catalyses XTP + H2O = XMP + diphosphate + H(+). It catalyses the reaction dITP + H2O = dIMP + diphosphate + H(+). The catalysed reaction is ITP + H2O = IMP + diphosphate + H(+). In terms of biological role, pyrophosphatase that catalyzes the hydrolysis of nucleoside triphosphates to their monophosphate derivatives, with a high preference for the non-canonical purine nucleotides XTP (xanthosine triphosphate), dITP (deoxyinosine triphosphate) and ITP. Seems to function as a house-cleaning enzyme that removes non-canonical purine nucleotides from the nucleotide pool, thus preventing their incorporation into DNA/RNA and avoiding chromosomal lesions. This Synechocystis sp. (strain ATCC 27184 / PCC 6803 / Kazusa) protein is dITP/XTP pyrophosphatase.